We begin with the raw amino-acid sequence, 514 residues long: Adenylosuccinate synthetase 2, chloroplastic (514 aa).

The transit peptide at 1–56 (MAMAAAAAVASQGLLATSSQQQKKSSAKLICNAATFFSGKRLLWVKSCNNGAVGLR) directs the protein to the chloroplast. GTP-binding positions include 100 to 106 (GDEGKGK) and 128 to 130 (GHT). Residue Asp-101 is the Proton acceptor of the active site. Asp-101 and Gly-128 together coordinate Mg(2+). Residues 101-104 (DEGK), 126-129 (NAGH), Thr-218, Arg-232, Gln-312, Thr-327, and Arg-391 contribute to the IMP site. The Proton donor role is filled by His-129. A substrate-binding site is contributed by 387–393 (TTTGRPR). GTP contacts are provided by residues Arg-393, 419–421 (KLD), and 502–504 (GVG).

The protein belongs to the adenylosuccinate synthetase family. Homodimer. It depends on Mg(2+) as a cofactor.

The protein localises to the plastid. It is found in the chloroplast. It catalyses the reaction IMP + L-aspartate + GTP = N(6)-(1,2-dicarboxyethyl)-AMP + GDP + phosphate + 2 H(+). Its pathway is purine metabolism; AMP biosynthesis via de novo pathway; AMP from IMP: step 1/2. Plays an important role in the de novo pathway and in the salvage pathway of purine nucleotide biosynthesis. Catalyzes the first committed step in the biosynthesis of AMP from IMP. The chain is Adenylosuccinate synthetase 2, chloroplastic from Physcomitrium patens (Spreading-leaved earth moss).